The sequence spans 304 residues: C-type lectin domain-containing protein 141 (304 aa).

The signal sequence occupies residues 1–19 (MRSSSTLLIAFGLFLASMS). The tract at residues 29–100 (GSGGHRPPSS…TTPEPTTTKV (72 aa)) is disordered. Low complexity predominate over residues 51-99 (TKPPKSTSTPSTSTSTPTTTTTTTTTTTTTPTTTTTTTTTTTPEPTTTK).

In Caenorhabditis elegans, this protein is C-type lectin domain-containing protein 141 (clec-141).